The following is a 116-amino-acid chain: Iron-sulfur cluster insertion protein ErpA (116 aa).

Iron-sulfur cluster-binding residues include C44, C108, and C110.

Belongs to the HesB/IscA family. As to quaternary structure, homodimer. Iron-sulfur cluster serves as cofactor.

Functionally, required for insertion of 4Fe-4S clusters for at least IspG. This chain is Iron-sulfur cluster insertion protein ErpA, found in Shewanella denitrificans (strain OS217 / ATCC BAA-1090 / DSM 15013).